The primary structure comprises 479 residues: Replication factor C large subunit (479 aa).

43–50 contributes to the ATP binding site; sequence GPPGVGKT. The segment at 441–479 is disordered; that stretch reads EEKEESVEEVAEEKPEEEREEPRARKKAGKNLTLDSFFS. Over residues 452–463 the composition is skewed to basic and acidic residues; sequence EEKPEEEREEPR.

Belongs to the activator 1 small subunits family. RfcL subfamily. In terms of assembly, heteropentamer composed of four small subunits (RfcS) and one large subunit (RfcL). Both subunits interact with PCNA.

Part of the RFC clamp loader complex which loads the PCNA sliding clamp onto DNA. The complex possesses DNA-dependent ATPase activity which is further stimulated by PCNA. The sequence is that of Replication factor C large subunit (rfcL) from Archaeoglobus fulgidus (strain ATCC 49558 / DSM 4304 / JCM 9628 / NBRC 100126 / VC-16).